Reading from the N-terminus, the 178-residue chain is Oligoribonuclease (178 aa).

One can recognise an Exonuclease domain in the interval 7–168 (LIWIDLEMTG…DDIRESIAEL (162 aa)). Residue Y128 is part of the active site.

It belongs to the oligoribonuclease family.

It is found in the cytoplasm. In terms of biological role, 3'-to-5' exoribonuclease specific for small oligoribonucleotides. This is Oligoribonuclease from Pseudomonas syringae pv. syringae (strain B728a).